A 334-amino-acid chain; its full sequence is 6-phosphogluconolactonase (334 aa).

Belongs to the cycloisomerase 2 family.

The enzyme catalyses 6-phospho-D-glucono-1,5-lactone + H2O = 6-phospho-D-gluconate + H(+). It participates in carbohydrate degradation; pentose phosphate pathway; D-ribulose 5-phosphate from D-glucose 6-phosphate (oxidative stage): step 2/3. Catalyzes the hydrolysis of 6-phosphogluconolactone to 6-phosphogluconate. The chain is 6-phosphogluconolactonase from Buchnera aphidicola subsp. Acyrthosiphon pisum (strain 5A).